Here is a 913-residue protein sequence, read N- to C-terminus: Epithelial discoidin domain-containing receptor 1 (913 aa).

The first 18 residues, 1 to 18 (MGPEALSSLLLLLLVASG), serve as a signal peptide directing secretion. Residues 21-417 (DMKGHFDPAK…VAKAEGSPTA (397 aa)) are Extracellular-facing. An F5/8 type C domain is found at 31–185 (CRYALGMQDR…VCLRVELYGC (155 aa)). Cystine bridges form between Cys-31/Cys-185 and Cys-74/Cys-177. The interval 192–367 (LSYTAPVGQT…LFSEISFISD (176 aa)) is DS-like domain. Ca(2+) is bound by residues Asn-211, Gln-230, Asp-233, Val-235, Tyr-253, and Tyr-255. Asn-211 is a glycosylation site (N-linked (GlcNAc...) asparagine). An N-linked (GlcNAc...) asparagine glycan is attached at Asn-260. Cys-303 and Cys-348 are joined by a disulfide. Ca(2+) is bound by residues Ser-360 and Glu-361. N-linked (GlcNAc...) asparagine glycans are attached at residues Asn-370 and Asn-394. The helical transmembrane segment at 418–438 (ILIGCLVAIILLLLLIIALML) threads the bilayer. At 439–913 (WRLHWRRLLS…FLAEDALNTV (475 aa)) the chain is on the cytoplasmic side. A disordered region spans residues 470–499 (ILINNRPGPREPPPYQEPRPRGNPPHSAPC). Residues 479 to 496 (REPPPYQEPRPRGNPPHS) show a composition bias toward pro residues. The PPxY motif motif lies at 481-484 (PPPY). Residues Tyr-484, Tyr-513, and Tyr-520 each carry the phosphotyrosine; by autocatalysis modification. The region spanning 610 to 905 (LRFKEKLGEG…PPFSQLHRFL (296 aa)) is the Protein kinase domain. ATP is bound at residue 616–624 (LGEGQFGEV). Phosphoserine is present on Ser-631. Lys-655 lines the ATP pocket. Position 740 is a phosphotyrosine; by autocatalysis (Tyr-740). The active-site Proton acceptor is the Asp-766. Phosphotyrosine; by autocatalysis is present on residues Tyr-792, Tyr-796, and Tyr-797.

It belongs to the protein kinase superfamily. Tyr protein kinase family. Insulin receptor subfamily. As to quaternary structure, homodimer. Interacts (via PPxY motif) with WWC1 (via WW domains) in a collagen-regulated manner. Forms a tripartite complex with WWC1 and PRKCZ, but predominantly in the absence of collagen. Interacts (tyrosine phosphorylated) with SHC1. Interacts with SRC. Interacts with MYH9. Interacts with CDH1. Interacts with PTPN11. Interacts with NCK2. Post-translationally, autophosphorylated in response to fibrillar collagen binding. In terms of processing, glycosylation of Asn-211, but apparently not of Asn-260 or Asn-394, prevents autophosphorylation from occurring in the absence of collagen. Detected in T-47D, MDA-MB-175 and HBL-100 breast carcinoma cells, A-431 epidermoid carcinoma cells, SW48 and SNU-C2B colon carcinoma cells and Hs 294T melanoma cells (at protein level). Expressed at low levels in most adult tissues and is highest in the brain, lung, placenta and kidney. Lower levels of expression are detected in melanocytes, heart, liver, skeletal muscle and pancreas. Abundant in breast carcinoma cell lines. In the colonic mucosa, expressed in epithelia but not in the connective tissue of the lamina propria. In the thyroid gland, expressed in the epithelium of the thyroid follicles. In pancreas, expressed in the islets of Langerhans cells, but not in the surrounding epithelial cells of the exocrine pancreas. In kidney, expressed in the epithelia of the distal tubules. Not expressed in connective tissue, endothelial cells, adipose tissue, muscle cells or cells of hematopoietic origin.

The protein resides in the cell membrane. It localises to the secreted. It carries out the reaction L-tyrosyl-[protein] + ATP = O-phospho-L-tyrosyl-[protein] + ADP + H(+). Its activity is regulated as follows. Inhibited by the multi-targeted cancer drugs imatinib and ponatinib. In terms of biological role, tyrosine kinase that functions as a cell surface receptor for fibrillar collagen and regulates cell attachment to the extracellular matrix, remodeling of the extracellular matrix, cell migration, differentiation, survival and cell proliferation. Collagen binding triggers a signaling pathway that involves SRC and leads to the activation of MAP kinases. Regulates remodeling of the extracellular matrix by up-regulation of the matrix metalloproteinases MMP2, MMP7 and MMP9, and thereby facilitates cell migration and wound healing. Required for normal blastocyst implantation during pregnancy, for normal mammary gland differentiation and normal lactation. Required for normal ear morphology and normal hearing. Promotes smooth muscle cell migration, and thereby contributes to arterial wound healing. Also plays a role in tumor cell invasion. Phosphorylates PTPN11. The chain is Epithelial discoidin domain-containing receptor 1 (DDR1) from Homo sapiens (Human).